The sequence spans 361 residues: D-alanine--D-alanine ligase (361 aa).

The ATP-grasp domain maps to 134–344 (KILAQRAGVP…YTDLITKLID (211 aa)). 169-224 (ASQLGSDLFVKPSNQGSSVGVSHVTNEKEYKVALAEAFKYDDKVLVEETVHGTEVE) contributes to the ATP binding site. The Mg(2+) site is built by D297, E311, and N313.

It belongs to the D-alanine--D-alanine ligase family. Requires Mg(2+) as cofactor. Mn(2+) serves as cofactor.

It is found in the cytoplasm. It carries out the reaction 2 D-alanine + ATP = D-alanyl-D-alanine + ADP + phosphate + H(+). The protein operates within cell wall biogenesis; peptidoglycan biosynthesis. Its function is as follows. Cell wall formation. The protein is D-alanine--D-alanine ligase of Lactobacillus johnsonii (strain CNCM I-12250 / La1 / NCC 533).